Reading from the N-terminus, the 422-residue chain is Transcription initiation factor TFIID subunit 15b (422 aa).

Disordered stretches follow at residues 1–24, 47–94, 111–263, and 368–422; these read MAGM…DGYG, YGGR…PNPS, ALAP…DAAT, and MAEK…SRPY. 2 stretches are compositionally biased toward gly residues: residues 8-24 and 47-83; these read DGGG…DGYG and YGGR…GGGG. The segment at 84–115 adopts a RanBP2-type zinc-finger fold; that stretch reads RDGDWRCPNPSCGNVNFARRVECNKCGALAPS. Residues 123–133 show a composition bias toward gly residues; it reads DRGGGGYSRGG. The span at 134-156 shows a compositional bias: basic and acidic residues; that stretch reads GDSDRGGGRGGRNDSGRSYESSR. Composition is skewed to gly residues over residues 219–229 and 236–247; these read PSYGGPRGGYG and GGRGGRSGGYDG. Over residues 252-263 the composition is skewed to basic and acidic residues; that stretch reads RRQEASYEDAAT. The RRM domain occupies 280–371; sequence ARIYISNLPP…NKISVTMAEK (92 aa). A compositionally biased stretch (gly residues) spans 382-397; the sequence is RGGGRGGGGGGYGGGG.

It belongs to the TAF15 family. As to quaternary structure, component of the TFIID complex. TFIID is composed of TATA binding protein (TBP) and a number of TBP-associated factors (TAFs) whose MWs range from 14-217 kDa. Interacts with TAF4, TAF4B, TAF5, TAF12B and TAF14. Expressed in roots, leaves and inflorescences.

It localises to the nucleus. Its function is as follows. TAFs are components of the transcription factor IID (TFIID) complex that is essential for mediating regulation of RNA polymerase transcription. This chain is Transcription initiation factor TFIID subunit 15b (TAF15B), found in Arabidopsis thaliana (Mouse-ear cress).